The chain runs to 276 residues: MALLDVCGAPRGQRPESALPVAGSGRRSDPGHYSFSMRSPELALPRGMQPTEFFQSLGGDGERNVQIEMAHGTTTLAFKFQHGVIAAVDSRASAGSYISALRVNKVIEINPYLLGTMSGCAADCQYWERLLAKECRLYYLRNGERISVSAASKLLSNMMCQYRGMGLSMGSMICGWDKKGPGLYYVDEHGTRLSGNMFSTGSGNTYAYGVMDSGYRPNLSPEEAYDLGRRAIAYATHRDSYSGGVVNMYHMKEDGWVKVESTDVSDLLHQYREANQ.

Residues Met-1–Tyr-33 form a disordered region. A propeptide spans Met-1–Gly-72 (removed in mature form). Residue Asp-5 is modified to Phosphothreonine. Thr-73 serves as the catalytic Nucleophile.

This sequence belongs to the peptidase T1B family. As to quaternary structure, the 26S proteasome consists of a 20S proteasome core and two 19S regulatory subunits. The 20S proteasome core is composed of 28 subunits that are arranged in four stacked rings, resulting in a barrel-shaped structure. The two end rings are each formed by seven alpha subunits, and the two central rings are each formed by seven beta subunits. The catalytic chamber with the active sites is on the inside of the barrel. Component of the immunoproteasome, where it displaces the equivalent housekeeping subunit PSMB5. Component of the spermatoproteasome, a form of the proteasome specifically found in testis. Directly interacts with POMP. Interacts with TAP1. In terms of assembly, (Microbial infection) Interacts with HIV-1 TAT protein. Post-translationally, autocleaved. The resulting N-terminal Thr residue of the mature subunit is responsible for the nucleophile proteolytic activity.

It localises to the cytoplasm. The protein localises to the nucleus. The enzyme catalyses Cleavage of peptide bonds with very broad specificity.. Its function is as follows. The proteasome is a multicatalytic proteinase complex which is characterized by its ability to cleave peptides with Arg, Phe, Tyr, Leu, and Glu adjacent to the leaving group at neutral or slightly basic pH. The proteasome has an ATP-dependent proteolytic activity. This subunit is involved in antigen processing to generate class I binding peptides. Replacement of PSMB5 by PSMB8 increases the capacity of the immunoproteasome to cleave model peptides after hydrophobic and basic residues. Involved in the generation of spliced peptides resulting from the ligation of two separate proteasomal cleavage products that are not contiguous in the parental protein. Acts as a major component of interferon gamma-induced sensitivity. Plays a key role in apoptosis via the degradation of the apoptotic inhibitor MCL1. May be involved in the inflammatory response pathway. In cancer cells, substitution of isoform 1 (E2) by isoform 2 (E1) results in immunoproteasome deficiency. Required for the differentiation of preadipocytes into adipocytes. In Homo sapiens (Human), this protein is Proteasome subunit beta type-8 (PSMB8).